The chain runs to 122 residues: Large ribosomal subunit protein uL14 (122 aa).

Belongs to the universal ribosomal protein uL14 family. In terms of assembly, part of the 50S ribosomal subunit. Forms a cluster with proteins L3 and L19. In the 70S ribosome, L14 and L19 interact and together make contacts with the 16S rRNA in bridges B5 and B8.

Binds to 23S rRNA. Forms part of two intersubunit bridges in the 70S ribosome. This is Large ribosomal subunit protein uL14 from Chlorobium phaeobacteroides (strain BS1).